Consider the following 403-residue polypeptide: F-box protein At1g60400 (403 aa).

One can recognise an F-box domain in the interval 13-59 (IDRLSALPEHLLCRILSELSTKDSVRTSVLSKHWRNLWLHVPVLELE).

The chain is F-box protein At1g60400 from Arabidopsis thaliana (Mouse-ear cress).